A 615-amino-acid chain; its full sequence is Increased rDNA silencing protein 4 (615 aa).

Disordered stretches follow at residues 38–135, 152–260, 277–304, and 323–445; these read SNEV…SSHS, LLGI…NRSQ, PSIASSNTTTTTSNQGSGLPNLVPNYSS, and KPKH…NEDK. Over residues 50 to 65 the composition is skewed to polar residues; it reads VSRNPQTRLSEPSLQK. Composition is skewed to low complexity over residues 121–135 and 157–168; these read HSQSKLSSDNNSSHS and SRSSSRNGSNES. The residue at position 180 (Ser-180) is a Phosphoserine. Residues 184–198 show a composition bias toward low complexity; that stretch reads LLTSFSSGRRLSSSS. A compositionally biased stretch (polar residues) spans 248–260; sequence NPDTSDVISNRSQ. Positions 281–290 are enriched in low complexity; that stretch reads SSNTTTTTSN. A compositionally biased stretch (basic and acidic residues) spans 365 to 377; it reads ENDHASSLHEGNL. A compositionally biased stretch (acidic residues) spans 389-402; the sequence is DVYDDTDSDSESDQ. The segment covering 409-438 has biased composition (basic residues); that stretch reads KPRKRDRIKRKIRNSANKTAHHRPIHRTRD. An EH domain is found at 460 to 571; that stretch reads ERKRYESMWV…QCVWDSVDRY (112 aa).

Belongs to the IRS4 family. As to quaternary structure, interacts with INP51.

Functionally, with TAX4, acts as a positive regulator of INP51 activity and phosphatidylinositol 4,5-bisphosphate turnover. Negatively regulates signaling through the cell integrity pathway, including the MAP kinase SLT2. Also seems to be involved in rDNA silencing. The sequence is that of Increased rDNA silencing protein 4 (IRS4) from Saccharomyces cerevisiae (strain ATCC 204508 / S288c) (Baker's yeast).